The following is an 814-amino-acid chain: E3 ubiquitin-protein ligase TRIM71 (814 aa).

The RING-type zinc finger occupies C12 to D76. The segment at Q111–R146 is disordered. Residues A120–A138 show a composition bias toward low complexity. Residues Q142–F189 form a B box-type 1; atypical zinc finger. Zn(2+) is bound by residues C147, C150, C171, H175, C224, H227, C247, and H252. Residues P219–L260 form a B box-type 2 zinc finger. A coiled-coil region spans residues R282–E370. Residues S425 to V526 form a Filamin repeat. 6 NHL repeats span residues T539 to C582, H586 to E629, L633 to D676, L680 to D723, A727 to N770, and L774 to F814.

It belongs to the TRIM/RBCC family.

The protein localises to the cytoplasm. The protein resides in the P-body. It carries out the reaction S-ubiquitinyl-[E2 ubiquitin-conjugating enzyme]-L-cysteine + [acceptor protein]-L-lysine = [E2 ubiquitin-conjugating enzyme]-L-cysteine + N(6)-ubiquitinyl-[acceptor protein]-L-lysine.. Its pathway is protein modification; protein ubiquitination. Functionally, E3 ubiquitin-protein ligase that cooperates with the microRNAs (miRNAs) machinery and promotes embryonic stem cells proliferation and maintenance. Binds to miRNAs and participates in post-transcriptional repression of transcripts. Required to maintain proliferation and prevent premature differentiation of neural progenitor cells during early neural development. The polypeptide is E3 ubiquitin-protein ligase TRIM71 (trim71) (Xenopus tropicalis (Western clawed frog)).